A 405-amino-acid chain; its full sequence is Dynactin subunit 2 (405 aa).

Residues 1 to 24 (MADPKYADLPGIARNEPDVYETSD) are disordered. Residues 101–134 (PQQKYQRLLHEIQELTQEVEKAQSTVKESAAEEK) adopt a coiled-coil conformation. The tract at residues 186–207 (AKTRKNPEGKSPAKGPGPDNEN) is disordered. Positions 383-403 (KENLATVEDNFTSIDARIKKL) form a coiled coil.

The protein belongs to the dynactin subunit 2 family. Subunit of dynactin, a multiprotein complex part of a tripartite complex with dynein and a adapter, such as BICDL1, BICD2 or HOOK3. The dynactin complex is built around ACTR1A/ACTB filament and consists of an actin-related filament composed of a shoulder domain, a pointed end and a barbed end. Its length is defined by its flexible shoulder domain. The soulder is composed of 2 DCTN1 subunits, 4 DCTN2 and 2 DCTN3.

It is found in the cytoplasm. It localises to the cytoskeleton. The protein localises to the microtubule organizing center. Its subcellular location is the centrosome. The protein resides in the membrane. Functionally, part of the dynactin complex that activates the molecular motor dynein for ultra-processive transport along microtubules. In the dynactin soulder domain, binds the ACTR1A filament and acts as a molecular ruler to determine the length. Modulates cytoplasmic dynein binding to an organelle, and plays a role in prometaphase chromosome alignment and spindle organization during mitosis. Involved in anchoring microtubules to centrosomes. The chain is Dynactin subunit 2 (dctn2) from Xenopus tropicalis (Western clawed frog).